A 407-amino-acid polypeptide reads, in one-letter code: Amylovoran biosynthesis glycosyltransferase AmsK (407 aa).

This sequence belongs to the glycosyltransferase group 1 family. Glycosyltransferase 4 subfamily.

It participates in glycan metabolism; exopolysaccharide biosynthesis. Its function is as follows. Involved in the biosynthesis of amylovoran which functions as a virulence factor. This Erwinia amylovora (Fire blight bacteria) protein is Amylovoran biosynthesis glycosyltransferase AmsK (amsK).